The following is a 655-amino-acid chain: Epithelial sodium channel subunit alpha (655 aa).

The Cytoplasmic portion of the chain corresponds to 1–55; it reads MTDKEEEAEGGKKKEPMIGFYDSYQELFEFFCNNTTIHGTIRMVCSKHNNMKTVS. The chain crosses the membrane as a helical span at residues 56-76; sequence WTILFITTFGVMYWQFGLLLG. Topologically, residues 77 to 531 are extracellular; sequence QYYSYPVSIT…SQWSLWFGSS (455 aa). Disulfide bonds link Cys102/Cys275, Cys199/Cys206, Cys252/Cys259, Cys364/Cys448, Cys385/Cys425, Cys385/Cys444, Cys389/Cys440, Cys398/Cys425, Cys398/Cys448, and Cys400/Cys414. The chain crosses the membrane as a helical span at residues 532–552; the sequence is VLSVVEMGELVFDLIAVGVIV. At 553 to 655 the chain is on the cytoplasmic side; sequence LRRRRREKCQ…QEASEGPTVL (103 aa). The tract at residues 561–587 is disordered; that stretch reads CQASSDGEGTSDSTAGTHRGQENASRS. Residues 562–586 show a composition bias toward polar residues; that stretch reads QASSDGEGTSDSTAGTHRGQENASR.

This sequence belongs to the amiloride-sensitive sodium channel (TC 1.A.6) family. SCNN1A subfamily. In terms of assembly, heterotrimer; containing an alpha/SCNN1A, a beta/SCNN1B and a gamma/SCNN1G subunit. As to expression, strongly expressed in gill, kidney and rectum (at protein level). More weakly expressed in muscle, brain, heart, liver and intestine.

The protein resides in the apical cell membrane. Its subcellular location is the cell projection. The protein localises to the cilium. It localises to the cytoplasmic granule. It is found in the cytoplasm. The protein resides in the cytoplasmic vesicle. Its subcellular location is the secretory vesicle. The protein localises to the acrosome. It localises to the flagellum. It catalyses the reaction Na(+)(in) = Na(+)(out). With respect to regulation, originally identified and characterized by its inhibition by the diuretic drug amiloride. Its function is as follows. This is one of the three pore-forming subunits of the heterotrimeric epithelial sodium channel (ENaC), a critical regulator of sodium balance and fluid homeostasis. ENaC operates in epithelial tissues, where it mediates the electrodiffusion of sodium ions from extracellular fluid through the apical membrane of cells, with water following osmotically. In Neoceratodus forsteri (Australian lungfish), this protein is Epithelial sodium channel subunit alpha (scnn1a).